The primary structure comprises 338 residues: Lipoate-protein ligase A (338 aa).

The region spanning 29-216 is the BPL/LPL catalytic domain; the sequence is PATQRVLFLW…AFFEHYSERV (188 aa). ATP contacts are provided by residues Arg71, 76–79, and Lys134; that span reads GAVF. Lys134 is a (R)-lipoate binding site.

The protein belongs to the LplA family. As to quaternary structure, monomer.

The protein localises to the cytoplasm. The enzyme catalyses L-lysyl-[lipoyl-carrier protein] + (R)-lipoate + ATP = N(6)-[(R)-lipoyl]-L-lysyl-[lipoyl-carrier protein] + AMP + diphosphate + H(+). The protein operates within protein modification; protein lipoylation via exogenous pathway; protein N(6)-(lipoyl)lysine from lipoate: step 1/2. Its pathway is protein modification; protein lipoylation via exogenous pathway; protein N(6)-(lipoyl)lysine from lipoate: step 2/2. Catalyzes both the ATP-dependent activation of exogenously supplied lipoate to lipoyl-AMP and the transfer of the activated lipoyl onto the lipoyl domains of lipoate-dependent enzymes. The chain is Lipoate-protein ligase A from Enterobacter sp. (strain 638).